Consider the following 596-residue polypeptide: tRNA(Met) cytidine acetyltransferase TmcA (596 aa).

Residues Q138, 160–169, and R285 contribute to the ATP site; that span reads GRGKSTLAGK. One can recognise an N-acetyltransferase domain in the interval 328–481; sequence SDLRRLFDAQ…SGYHSAMMLY (154 aa). Acetyl-CoA-binding positions include 406–408 and 413–419; these read IAV and QKQGIGK.

The protein belongs to the RNA cytidine acetyltransferase family. TmcA subfamily.

The protein localises to the cytoplasm. The catalysed reaction is cytidine(34) in elongator tRNA(Met) + acetyl-CoA + ATP + H2O = N(4)-acetylcytidine(34) in elongator tRNA(Met) + ADP + phosphate + CoA + H(+). Catalyzes the formation of N(4)-acetylcytidine (ac(4)C) at the wobble position of tRNA(Met), by using acetyl-CoA as an acetyl donor and ATP (or GTP). The sequence is that of tRNA(Met) cytidine acetyltransferase TmcA from Actinobacillus pleuropneumoniae serotype 5b (strain L20).